The chain runs to 127 residues: UPF0325 protein VS_2356 (127 aa).

The protein belongs to the UPF0325 family.

The chain is UPF0325 protein VS_2356 from Vibrio atlanticus (strain LGP32) (Vibrio splendidus (strain Mel32)).